The chain runs to 513 residues: Histidine ammonia-lyase (513 aa).

The 5-imidazolinone (Ala-Gly) cross-link spans Ala-143–Gly-145. Ser-144 bears the 2,3-didehydroalanine (Ser) mark.

Belongs to the PAL/histidase family. Contains an active site 4-methylidene-imidazol-5-one (MIO), which is formed autocatalytically by cyclization and dehydration of residues Ala-Ser-Gly.

Its subcellular location is the cytoplasm. It catalyses the reaction L-histidine = trans-urocanate + NH4(+). The protein operates within amino-acid degradation; L-histidine degradation into L-glutamate; N-formimidoyl-L-glutamate from L-histidine: step 1/3. This Xanthomonas axonopodis pv. citri (strain 306) protein is Histidine ammonia-lyase.